The following is a 544-amino-acid chain: Esterase-6 (544 aa).

The N-terminal stretch at 1–21 (MNYVGLGLIIVLSCLWLGSNA) is a signal peptide. N-linked (GlcNAc...) asparagine glycosylation occurs at Asn42. The cysteines at positions 86 and 105 are disulfide-linked. The active-site Acyl-ester intermediate is Ser209. A disulfide bridge links Cys261 with Cys273. N-linked (GlcNAc...) asparagine glycans are attached at residues Asn420 and Asn456. The active-site Charge relay system is the His466. An N-linked (GlcNAc...) asparagine glycan is attached at Asn506. Cys514 and Cys535 are disulfide-bonded.

It belongs to the type-B carboxylesterase/lipase family. In terms of assembly, monomer. As to expression, specifically expressed in the ejaculatory bulbs of male.

Its subcellular location is the secreted. The enzyme catalyses a carboxylic ester + H2O = an alcohol + a carboxylate + H(+). Transferred from the ejaculatory bulbs of males to the female genitals upon copulation, plays an important role in the reproductive biology. This is Esterase-6 (Est-6) from Drosophila melanogaster (Fruit fly).